The chain runs to 110 residues: Prothymosin alpha (110 aa).

Methionine 1 is modified (N-acetylmethionine). The interval 1–110 (MSDAAVDTSS…TKKQKTDEDD (110 aa)) is disordered. The residue at position 2 (serine 2) is an N-acetylserine; in Prothymosin alpha, N-terminally processed. Residue serine 2 is modified to Phosphoserine. Threonine 8 bears the Phosphothreonine mark. Residues serine 9 and serine 10 each carry the phosphoserine modification. A phosphothreonine mark is found at threonine 13 and threonine 14. Basic and acidic residues predominate over residues 13–31 (TTKDLKEKKEVVEEAENGR). Residue lysine 15 is modified to N6-acetyllysine; alternate. The residue at position 15 (lysine 15) is an N6-succinyllysine; alternate. Residues 42–83 (ENGEQEADNEVDEEEEEGGEEEEEEEEGDGEEEDGDEDEEAE) are compositionally biased toward acidic residues. The span at 100 to 110 (DTKKQKTDEDD) shows a compositional bias: basic and acidic residues. Phosphothreonine is present on threonine 101. N6-acetyllysine; alternate is present on lysine 102. Lysine 102 is covalently cross-linked (Glycyl lysine isopeptide (Lys-Gly) (interchain with G-Cter in SUMO2); alternate). Threonine 106 is subject to Phosphothreonine.

This sequence belongs to the pro/parathymosin family. Interacts with NUPR1; regulates apoptotic process. Post-translationally, covalently linked to a small RNA of about 20 nucleotides.

The protein resides in the nucleus. Functionally, prothymosin alpha may mediate immune function by conferring resistance to certain opportunistic infections. The protein is Prothymosin alpha (PTMA) of Pongo abelii (Sumatran orangutan).